Consider the following 311-residue polypeptide: Homeobox protein Hox-B1a (311 aa).

A DNA-binding region (homeobox) is located at residues 217 to 276 (QNTIRTNFTTKQLTELEKEFHFSKYLTRARRVEIAATLELNETQVKIWFQNRRMKQKKRE). Residues 267–311 (NRRMKQKKREKEGLAPASSTSSKDLEDQSDHSTSTSPEASPSPDS) form a disordered region. Positions 298–311 (STSTSPEASPSPDS) are enriched in low complexity.

It belongs to the Antp homeobox family. Labial subfamily.

It localises to the nucleus. Functionally, sequence-specific transcription factor which is part of a developmental regulatory system that provides cells with specific positional identities on the anterior-posterior axis. This is Homeobox protein Hox-B1a (hoxb1a) from Danio rerio (Zebrafish).